The following is a 167-amino-acid chain: Large ribosomal subunit protein uL10 (167 aa).

It belongs to the universal ribosomal protein uL10 family. In terms of assembly, part of the ribosomal stalk of the 50S ribosomal subunit. The N-terminus interacts with L11 and the large rRNA to form the base of the stalk. The C-terminus forms an elongated spine to which L12 dimers bind in a sequential fashion forming a multimeric L10(L12)X complex.

In terms of biological role, forms part of the ribosomal stalk, playing a central role in the interaction of the ribosome with GTP-bound translation factors. The chain is Large ribosomal subunit protein uL10 from Latilactobacillus sakei subsp. sakei (strain 23K) (Lactobacillus sakei subsp. sakei).